The chain runs to 526 residues: NAD(P)H-quinone oxidoreductase chain 4 1 (526 aa).

The next 14 membrane-spanning stretches (helical) occupy residues 7–27 (FPWL…IPLL), 35–55 (WYAL…FGWH), 86–106 (LSFP…VAAW), 114–134 (LFFF…LAQD), 135–155 (LLLF…LIAI), 168–188 (FILY…AMAF), 208–228 (ALQI…LPVF), 242–262 (SAPI…YGLI), 276–296 (FAPV…LAAL), 310–330 (IAHM…GLNG), 331–351 (ALLQ…LTGI), 374–396 (AFAL…GFVG), 417–437 (GIAL…LSML), and 463–483 (MAVA…PRLA).

This sequence belongs to the complex I subunit 4 family.

The protein localises to the cellular thylakoid membrane. It catalyses the reaction a plastoquinone + NADH + (n+1) H(+)(in) = a plastoquinol + NAD(+) + n H(+)(out). It carries out the reaction a plastoquinone + NADPH + (n+1) H(+)(in) = a plastoquinol + NADP(+) + n H(+)(out). In terms of biological role, NDH-1 shuttles electrons from NAD(P)H, via FMN and iron-sulfur (Fe-S) centers, to quinones in the respiratory chain. The immediate electron acceptor for the enzyme in this species is believed to be plastoquinone. Couples the redox reaction to proton translocation (for every two electrons transferred, four hydrogen ions are translocated across the cytoplasmic membrane), and thus conserves the redox energy in a proton gradient. The sequence is that of NAD(P)H-quinone oxidoreductase chain 4 1 from Synechococcus sp. (strain JA-3-3Ab) (Cyanobacteria bacterium Yellowstone A-Prime).